The following is a 627-amino-acid chain: DNA mismatch repair protein MutL (627 aa).

The tract at residues 363–397 is disordered; sequence FAEPAAREPVAPRYSPAPASGSRPAAPWPNAQPGY. The segment covering 364-387 has biased composition (low complexity); sequence AEPAAREPVAPRYSPAPASGSRPA.

Belongs to the DNA mismatch repair MutL/HexB family.

Its function is as follows. This protein is involved in the repair of mismatches in DNA. It is required for dam-dependent methyl-directed DNA mismatch repair. May act as a 'molecular matchmaker', a protein that promotes the formation of a stable complex between two or more DNA-binding proteins in an ATP-dependent manner without itself being part of a final effector complex. The chain is DNA mismatch repair protein MutL from Shigella flexneri serotype 5b (strain 8401).